We begin with the raw amino-acid sequence, 138 residues long: Superoxide dismutase [Mn] (138 aa).

The Mn(2+) site is built by Ser1, His49, Asp133, and His137.

This sequence belongs to the iron/manganese superoxide dismutase family. Mn(2+) is required as a cofactor.

The enzyme catalyses 2 superoxide + 2 H(+) = H2O2 + O2. In terms of biological role, destroys superoxide anion radicals which are normally produced within the cells and which are toxic to biological systems. The chain is Superoxide dismutase [Mn] (sodA) from Mycobacterium marinum.